The following is a 204-amino-acid chain: Cytochrome c biogenesis ATP-binding export protein CcmA (204 aa).

The region spanning 3–204 is the ABC transporter domain; that stretch reads LTVTDLAIAR…PLDDPDGDFL (202 aa). Residue 35 to 42 participates in ATP binding; the sequence is GPNGAGKT.

Belongs to the ABC transporter superfamily. CcmA exporter (TC 3.A.1.107) family. As to quaternary structure, the complex is composed of two ATP-binding proteins (CcmA) and two transmembrane proteins (CcmB).

It localises to the cell membrane. The catalysed reaction is heme b(in) + ATP + H2O = heme b(out) + ADP + phosphate + H(+). Its function is as follows. Part of the ABC transporter complex CcmAB involved in the biogenesis of c-type cytochromes; once thought to export heme, this seems not to be the case, but its exact role is uncertain. Responsible for energy coupling to the transport system. The sequence is that of Cytochrome c biogenesis ATP-binding export protein CcmA from Ruegeria pomeroyi (strain ATCC 700808 / DSM 15171 / DSS-3) (Silicibacter pomeroyi).